A 468-amino-acid polypeptide reads, in one-letter code: Beta-monoglucosyldiacylglycerol synthase (468 aa).

The next 4 helical transmembrane spans lie at 51 to 71 (AALVLTIVWSGTIALHLVSWG), 72 to 92 (SIFILGLTTVLGIHALGVVFA), 358 to 378 (MLMFMLTMYILPTAAIPDLLM), and 387 to 407 (MLGPVTGLSVTMSVVGMFAGL).

The protein belongs to the glycosyltransferase 2 family. It depends on Mg(2+) as a cofactor.

The protein localises to the membrane. It carries out the reaction a 1,2-diacyl-sn-glycerol + UDP-alpha-D-glucose = a 1,2-diacyl-3-O-(beta-D-glucopyranosyl)-sn-glycerol + UDP + H(+). In terms of biological role, glucosyltransferase involved in the biosynthesis of the non-bilayer-forming membrane lipid beta-monoglucosyldiacylglycerol which contributes to regulate the properties and stability of the membrane. Catalyzes the transfer of a glucosyl residue from UDP-Glc to diacylglycerol (DAG) acceptor to form the corresponding beta-glucosyl-DAG (1,2-diacyl-3-O-(beta-D-glucopyranosyl)-sn-glycerol). It can only use UDP-Glc as sugar donor. Two types of DAG (dipalmitoyl-DAG (DPDAG) and 1-oleoyl-2-palmitoyl-DAG (OPDAG)) can be used as sugar acceptors, but OPDAG is preferred. In Nostoc sp. (strain PCC 7120 / SAG 25.82 / UTEX 2576), this protein is Beta-monoglucosyldiacylglycerol synthase.